A 424-amino-acid polypeptide reads, in one-letter code: Tol-Pal system protein TolB (424 aa).

The first 20 residues, 1-20 (MKQFIVFILSLYTTLSWAVL), serve as a signal peptide directing secretion.

It belongs to the TolB family. In terms of assembly, the Tol-Pal system is composed of five core proteins: the inner membrane proteins TolA, TolQ and TolR, the periplasmic protein TolB and the outer membrane protein Pal. They form a network linking the inner and outer membranes and the peptidoglycan layer.

The protein localises to the periplasm. Its function is as follows. Part of the Tol-Pal system, which plays a role in outer membrane invagination during cell division and is important for maintaining outer membrane integrity. This chain is Tol-Pal system protein TolB, found in Vesicomyosocius okutanii subsp. Calyptogena okutanii (strain HA).